Consider the following 206-residue polypeptide: Thymidylate kinase (206 aa).

10-17 (GVDGVGKT) contacts ATP.

This sequence belongs to the thymidylate kinase family.

The catalysed reaction is dTMP + ATP = dTDP + ADP. Phosphorylation of dTMP to form dTDP in both de novo and salvage pathways of dTTP synthesis. The protein is Thymidylate kinase of Bifidobacterium longum (strain NCC 2705).